The sequence spans 354 residues: MNTFGRKLTLTTFGESHGAAIGGVIDGFPAGVRIDTQFLQSELDRRRPGRNKFATARDEADRAEILSGVFEGVSSGAPIAFVILNQNQKSNDYENLREIFRPGHADFTYFKKFGIRDHRGGGRVSARETAVRVAGGAFAQMLLNEFGVSVKSGVLSVADVVAGEPDFDLASKSEIYSLGNEDAMKSLIMKAREQHDSVGASVLSVVDGAPTGLGEGLYYKLDAVLAAALMGINGVKAVEIGEGVNASRLFGSQNNDEMSEQGFLSNHAGGILGGISTGERIVLKSHFKPTPSIFKAQKTQNLKGECVEFELRGRHDPCIGVRGSVVATAMIRLVICDMMLLNLGSNLANLKKFY.

Arg46 lines the NADP(+) pocket. Residues 123-125 (RVS), 233-234 (NG), Gly273, 288-292 (KPTPS), and Arg314 each bind FMN.

It belongs to the chorismate synthase family. As to quaternary structure, homotetramer. It depends on FMNH2 as a cofactor.

It carries out the reaction 5-O-(1-carboxyvinyl)-3-phosphoshikimate = chorismate + phosphate. Its pathway is metabolic intermediate biosynthesis; chorismate biosynthesis; chorismate from D-erythrose 4-phosphate and phosphoenolpyruvate: step 7/7. Catalyzes the anti-1,4-elimination of the C-3 phosphate and the C-6 proR hydrogen from 5-enolpyruvylshikimate-3-phosphate (EPSP) to yield chorismate, which is the branch point compound that serves as the starting substrate for the three terminal pathways of aromatic amino acid biosynthesis. This reaction introduces a second double bond into the aromatic ring system. This Campylobacter curvus (strain 525.92) protein is Chorismate synthase.